The sequence spans 618 residues: DNA mismatch repair protein MutL (618 aa).

Positions 366–381 (AEPTAAREPATPRYSG) are enriched in low complexity. Positions 366 to 403 (AEPTAAREPATPRYSGGASGGNGGRQSAGGWPHAQPGY) are disordered. The span at 382–392 (GASGGNGGRQS) shows a compositional bias: gly residues.

This sequence belongs to the DNA mismatch repair MutL/HexB family.

This protein is involved in the repair of mismatches in DNA. It is required for dam-dependent methyl-directed DNA mismatch repair. May act as a 'molecular matchmaker', a protein that promotes the formation of a stable complex between two or more DNA-binding proteins in an ATP-dependent manner without itself being part of a final effector complex. This is DNA mismatch repair protein MutL from Salmonella schwarzengrund (strain CVM19633).